Reading from the N-terminus, the 401-residue chain is Propionate kinase (401 aa).

Residues Asn-11 and Lys-18 each contribute to the ATP site. Asn-11 lines the Mg(2+) pocket. A substrate-binding site is contributed by Arg-86. The active-site Proton donor/acceptor is Asp-143. Residues His-175, 203–207 (HLGNG), 278–280 (DLR), and 326–330 (GIGEN) contribute to the ATP site.

The protein belongs to the acetokinase family. TdcD subfamily. Homodimer. The cofactor is Mg(2+).

The enzyme catalyses propanoate + ATP = propanoyl phosphate + ADP. It functions in the pathway amino-acid degradation; L-threonine degradation via propanoate pathway; propanoate from L-threonine: step 4/4. Its function is as follows. Catalyzes the conversion of propionyl phosphate and ADP to propionate and ATP. This Klebsiella pneumoniae (strain 342) protein is Propionate kinase.